A 392-amino-acid polypeptide reads, in one-letter code: V-type proton ATPase subunit C (392 aa).

An N-acetylalanine modification is found at A2.

Belongs to the V-ATPase C subunit family. In terms of assembly, V-ATPase is a heteromultimeric enzyme composed of a peripheral catalytic V1 complex (components A to H) attached to an integral membrane V0 proton pore complex (components: a, c, c', c'', d, e, f and VOA1). Interacts directly with VMA4.

The protein localises to the vacuole membrane. Subunit of the V1 complex of vacuolar(H+)-ATPase (V-ATPase), a multisubunit enzyme composed of a peripheral complex (V1) that hydrolyzes ATP and a membrane integral complex (V0) that translocates protons. V-ATPase is responsible for acidifying and maintaining the pH of intracellular compartments. Subunit C is necessary for the assembly of the catalytic sector of the enzyme and is likely to have a specific function in its catalytic activity. Reversibly leaves the enzyme after glucose depletion, causing the catalytic subcomplex V1 to detach from the V0 section. The chain is V-type proton ATPase subunit C from Saccharomyces cerevisiae (strain ATCC 204508 / S288c) (Baker's yeast).